Reading from the N-terminus, the 553-residue chain is Fusion glycoprotein F0 (553 aa).

The signal sequence occupies residues 1–31; it reads MGPRPSTKNPTPMMLTVRVALVLSCICPANS. Topologically, residues 32 to 500 are extracellular; it reads IDGRPLAAAG…VNVKLTSTSA (469 aa). Cystine bridges form between Cys76–Cys199, Cys338–Cys347, and Cys362–Cys370. Asn85 carries an N-linked (GlcNAc...) asparagine; by host glycan. The interval 117 to 141 is fusion peptide; that stretch reads FIGAIIGGVALGVATAAQITAAAAL. Positions 142-170 form a coiled coil; it reads IQAKQNAANILRLKESIAATNEAVHEVTD. Asn191 carries an N-linked (GlcNAc...) asparagine; by host glycan. N-linked (GlcNAc...) asparagine; by host glycosylation is found at Asn366, Asn447, and Asn471. Residues 466-491 adopt a coiled-coil conformation; the sequence is ELGNVNNSISNALNKLEESNSKLDKV. A helical transmembrane segment spans residues 501–521; that stretch reads LITYIVLTIISLVFGILSLVL. At 522-553 the chain is on the cytoplasmic side; it reads ACYLMYKQKAQQKTLLWLGNNTLDQMRATTKM. Cys523 is lipidated: S-palmitoyl cysteine; by host.

This sequence belongs to the paramyxoviruses fusion glycoprotein family. Homotrimer of disulfide-linked F1-F2. Post-translationally, the inactive precursor F0 is glycosylated and proteolytically cleaved into F1 and F2 to be functionally active. The cleavage is mediated by cellular proteases during the transport and maturation of the polypeptide.

It localises to the virion membrane. The protein resides in the host cell membrane. Class I viral fusion protein. Under the current model, the protein has at least 3 conformational states: pre-fusion native state, pre-hairpin intermediate state, and post-fusion hairpin state. During viral and plasma cell membrane fusion, the heptad repeat (HR) regions assume a trimer-of-hairpins structure, positioning the fusion peptide in close proximity to the C-terminal region of the ectodomain. The formation of this structure appears to drive apposition and subsequent fusion of viral and plasma cell membranes. Directs fusion of viral and cellular membranes leading to delivery of the nucleocapsid into the cytoplasm. This fusion is pH independent and occurs directly at the outer cell membrane. The trimer of F1-F2 (F protein) probably interacts with HN at the virion surface. Upon HN binding to its cellular receptor, the hydrophobic fusion peptide is unmasked and interacts with the cellular membrane, inducing the fusion between cell and virion membranes. Later in infection, F proteins expressed at the plasma membrane of infected cells could mediate fusion with adjacent cells to form syncytia, a cytopathic effect that could lead to tissue necrosis. This is Fusion glycoprotein F0 (F) from Gallus gallus (Chicken).